The chain runs to 164 residues: R-phycoerythrin alpha chain (164 aa).

2 residues coordinate (2R,3E)-phycoerythrobilin: C82 and C139.

This sequence belongs to the phycobiliprotein family. In terms of assembly, heterodimer of an alpha and a beta chain. In terms of processing, contains two covalently linked bilin chromophores.

It is found in the plastid. The protein resides in the chloroplast thylakoid membrane. Functionally, light-harvesting photosynthetic bile pigment-protein from the phycobiliprotein complex. This Pyropia tenera (Nori) protein is R-phycoerythrin alpha chain (cpeA).